The following is a 103-amino-acid chain: Pyrimidine/purine nucleoside phosphorylase (103 aa).

The protein belongs to the nucleoside phosphorylase PpnP family.

The enzyme catalyses a purine D-ribonucleoside + phosphate = a purine nucleobase + alpha-D-ribose 1-phosphate. It catalyses the reaction adenosine + phosphate = alpha-D-ribose 1-phosphate + adenine. It carries out the reaction cytidine + phosphate = cytosine + alpha-D-ribose 1-phosphate. The catalysed reaction is guanosine + phosphate = alpha-D-ribose 1-phosphate + guanine. The enzyme catalyses inosine + phosphate = alpha-D-ribose 1-phosphate + hypoxanthine. It catalyses the reaction thymidine + phosphate = 2-deoxy-alpha-D-ribose 1-phosphate + thymine. It carries out the reaction uridine + phosphate = alpha-D-ribose 1-phosphate + uracil. The catalysed reaction is xanthosine + phosphate = alpha-D-ribose 1-phosphate + xanthine. In terms of biological role, catalyzes the phosphorolysis of diverse nucleosides, yielding D-ribose 1-phosphate and the respective free bases. Can use uridine, adenosine, guanosine, cytidine, thymidine, inosine and xanthosine as substrates. Also catalyzes the reverse reactions. The sequence is that of Pyrimidine/purine nucleoside phosphorylase from Shewanella oneidensis (strain ATCC 700550 / JCM 31522 / CIP 106686 / LMG 19005 / NCIMB 14063 / MR-1).